A 330-amino-acid polypeptide reads, in one-letter code: Electron transfer flavoprotein subunit alpha (330 aa).

Residue 270 to 298 (LYIACGISGAIQHLAGMSNSGTIVAINKN) participates in FAD binding.

The protein belongs to the ETF alpha-subunit/FixB family. As to quaternary structure, heterodimer of an alpha and a beta subunit. The cofactor is FAD.

The electron transfer flavoprotein serves as a specific electron acceptor for other dehydrogenases. It transfers the electrons to the main respiratory chain via ETF-ubiquinone oxidoreductase (ETF dehydrogenase). The sequence is that of Electron transfer flavoprotein subunit alpha (etfA) from Thermoanaerobacterium thermosaccharolyticum (strain ATCC 7956 / DSM 571 / NCIMB 9385 / NCA 3814 / NCTC 13789 / WDCM 00135 / 2032) (Clostridium thermosaccharolyticum).